Consider the following 142-residue polypeptide: Nucleoside diphosphate kinase (142 aa).

Residues K9, F57, R85, T91, R102, and N112 each coordinate ATP. Catalysis depends on H115, which acts as the Pros-phosphohistidine intermediate.

The protein belongs to the NDK family. In terms of assembly, homotetramer. Mg(2+) is required as a cofactor.

It localises to the cytoplasm. It carries out the reaction a 2'-deoxyribonucleoside 5'-diphosphate + ATP = a 2'-deoxyribonucleoside 5'-triphosphate + ADP. The enzyme catalyses a ribonucleoside 5'-diphosphate + ATP = a ribonucleoside 5'-triphosphate + ADP. Functionally, major role in the synthesis of nucleoside triphosphates other than ATP. The ATP gamma phosphate is transferred to the NDP beta phosphate via a ping-pong mechanism, using a phosphorylated active-site intermediate. The polypeptide is Nucleoside diphosphate kinase (Dehalococcoides mccartyi (strain CBDB1)).